We begin with the raw amino-acid sequence, 208 residues long: MGVTVVSHPLVQHKLTIMRKKETSTASFRRLLKEISLLLCYEVTRNLELTTMSIETPLMPMEAPVLEGKKLVFASILRAGNGLLEGMLDLVPAARVAHIGLYRDHDTLQPIEYYFKAPEDIVNRLVIVVDPMLATANSAIAAIDKLKERGATNIRFLCLLAAPEGIERFTKAHPDVEVFTASIDECLDEKGYIVPGLGDAGDRMYGTK.

5-phospho-alpha-D-ribose 1-diphosphate-binding positions include R78, R103, and 130 to 138; that span reads DPMLATANS. Uracil-binding positions include I193 and 198-200; that span reads GDA. A 5-phospho-alpha-D-ribose 1-diphosphate-binding site is contributed by D199.

The protein belongs to the UPRTase family. The cofactor is Mg(2+).

It carries out the reaction UMP + diphosphate = 5-phospho-alpha-D-ribose 1-diphosphate + uracil. Its pathway is pyrimidine metabolism; UMP biosynthesis via salvage pathway; UMP from uracil: step 1/1. Allosterically activated by GTP. In terms of biological role, catalyzes the conversion of uracil and 5-phospho-alpha-D-ribose 1-diphosphate (PRPP) to UMP and diphosphate. In Brucella melitensis biotype 2 (strain ATCC 23457), this protein is Uracil phosphoribosyltransferase.